The primary structure comprises 602 residues: Arginine--tRNA ligase (602 aa).

A 'HIGH' region motif is present at residues Ala-124–Arg-134.

Belongs to the class-I aminoacyl-tRNA synthetase family.

The protein localises to the cytoplasm. The enzyme catalyses tRNA(Arg) + L-arginine + ATP = L-arginyl-tRNA(Arg) + AMP + diphosphate. In Halorubrum lacusprofundi (strain ATCC 49239 / DSM 5036 / JCM 8891 / ACAM 34), this protein is Arginine--tRNA ligase.